The chain runs to 121 residues: UPF0102 protein VP0448 (121 aa).

It belongs to the UPF0102 family.

This Vibrio parahaemolyticus serotype O3:K6 (strain RIMD 2210633) protein is UPF0102 protein VP0448.